Reading from the N-terminus, the 732-residue chain is Polyribonucleotide nucleotidyltransferase (732 aa).

Residues D502 and D508 each contribute to the Mg(2+) site. One can recognise a KH domain in the interval 569–628 (PRLTSIQIPVDAIGMVIGKGGETIRSITEETGAEINIDDDGTVTIACSSPEGTKAAVETI). The region spanning 638–712 (GTIYMGKVRD…GKTKFALSIK (75 aa)) is the S1 motif domain.

Belongs to the polyribonucleotide nucleotidyltransferase family. Mg(2+) is required as a cofactor.

The protein resides in the cytoplasm. The enzyme catalyses RNA(n+1) + phosphate = RNA(n) + a ribonucleoside 5'-diphosphate. In terms of biological role, involved in mRNA degradation. Catalyzes the phosphorolysis of single-stranded polyribonucleotides processively in the 3'- to 5'-direction. In Chlorobaculum parvum (strain DSM 263 / NCIMB 8327) (Chlorobium vibrioforme subsp. thiosulfatophilum), this protein is Polyribonucleotide nucleotidyltransferase.